The chain runs to 398 residues: Serine/threonine-protein kinase ppk23 (398 aa).

The region spanning 74–359 is the Protein kinase domain; it reads YEILEKIEEG…AKEALEHPYF (286 aa). ATP-binding positions include 80–88 and Lys103; that span reads IEEGSYGIV. Asp198 acts as the Proton acceptor in catalysis. The tract at residues 359–398 is disordered; the sequence is FYESPRPKDPKFFPTFPSKAKGESKEKNVFQSFRSASPKK. A compositionally biased stretch (polar residues) spans 387–398; that stretch reads VFQSFRSASPKK.

Belongs to the protein kinase superfamily. Ser/Thr protein kinase family.

The protein resides in the nucleus. The catalysed reaction is L-seryl-[protein] + ATP = O-phospho-L-seryl-[protein] + ADP + H(+). It carries out the reaction L-threonyl-[protein] + ATP = O-phospho-L-threonyl-[protein] + ADP + H(+). The polypeptide is Serine/threonine-protein kinase ppk23 (ppk23) (Schizosaccharomyces pombe (strain 972 / ATCC 24843) (Fission yeast)).